The following is a 157-amino-acid chain: Homeobox protein DBX2 (157 aa).

The homeobox DNA-binding region spans 9-68 (GILRRAVFSEDQRKALEKMFQKQKYISKTDRKKLAINLGLKESQVKIWFQNRRMKWRNSK). The tract at residues 105-157 (SQEQTSPRWKEKSPGNSERLTSTQPPPRANSSQSPLYLYPDHDTANKAVTSSD) is disordered. Over residues 118–139 (PGNSERLTSTQPPPRANSSQSP) the composition is skewed to polar residues.

The protein belongs to the H2.0 homeobox family. In terms of tissue distribution, localized to the central nervous system during embryogenesis. It is found restricted to the rostro-caudal and dorso-ventral regions of the hindbrain. In the ventricular zone of the spinal cord, it localizes to the dorsal part of the basal plate. In the adult, it is detected in ovary.

The protein resides in the nucleus. Functionally, appears to perform a very early function in establishing the identity of a subset of cells that originate in the region of the ventricular zone in the developing spinal cord and in the hindbrain. The sequence is that of Homeobox protein DBX2 (DBX2) from Gallus gallus (Chicken).